Consider the following 512-residue polypeptide: Sucrose-6-phosphate hydrolase (512 aa).

Substrate contacts are provided by residues 40–43 (WMND), Gln59, Trp67, 102–103 (FS), 165–166 (RD), Glu229, and Trp311. Asp43 is a catalytic residue.

It belongs to the glycosyl hydrolase 32 family.

The protein localises to the cytoplasm. It carries out the reaction Hydrolysis of terminal non-reducing beta-D-fructofuranoside residues in beta-D-fructofuranosides.. The protein operates within glycan biosynthesis; sucrose metabolism. The protein is Sucrose-6-phosphate hydrolase (sacA) of Zymomonas mobilis subsp. mobilis (strain ATCC 31821 / ZM4 / CP4).